Reading from the N-terminus, the 323-residue chain is Arginase-1 (323 aa).

The segment at 1–27 (MSSKPKPIEIIGAPFSKGQPRGGVEKG) is disordered. Residue Lys-17 is modified to N6-succinyllysine. A phosphoserine mark is found at Ser-62 and Ser-72. Lys-75 is subject to N6-succinyllysine. 4 residues coordinate Mn(2+): His-101, Asp-124, His-126, and Asp-128. Residues 126–130 (HTDIN) and 137–139 (SGN) contribute to the substrate site. A Phosphoserine modification is found at Ser-163. Residue Asp-183 participates in substrate binding. Residue Ser-217 is modified to Phosphoserine. Positions 232 and 234 each coordinate Mn(2+). 2 residues coordinate substrate: Thr-246 and Glu-277. Thr-281 carries the post-translational modification Phosphothreonine.

This sequence belongs to the arginase family. Homotrimer. Interacts with CMTM6. Requires Mn(2+) as cofactor. In terms of tissue distribution, detected in liver (at protein level).

It localises to the cytoplasm. The protein resides in the cytoplasmic granule. The catalysed reaction is L-arginine + H2O = urea + L-ornithine. It functions in the pathway nitrogen metabolism; urea cycle; L-ornithine and urea from L-arginine: step 1/1. With respect to regulation, inactivated by diethyl pyrocarbonate (DEPC). Key element of the urea cycle converting L-arginine to urea and L-ornithine, which is further metabolized into metabolites proline and polyamides that drive collagen synthesis and bioenergetic pathways critical for cell proliferation, respectively; the urea cycle takes place primarily in the liver and, to a lesser extent, in the kidneys. Functionally, functions in L-arginine homeostasis in nonhepatic tissues characterized by the competition between nitric oxide synthase (NOS) and arginase for the available intracellular substrate arginine. Arginine metabolism is a critical regulator of innate and adaptive immune responses. Involved in an antimicrobial effector pathway in polymorphonuclear granulocytes (PMN). Upon PMN cell death is liberated from the phagolysosome and depletes arginine in the microenvironment leading to suppressed T cell and natural killer (NK) cell proliferation and cytokine secretion. In group 2 innate lymphoid cells (ILC2s) promotes acute type 2 inflammation in the lung and is involved in optimal ILC2 proliferation but not survival. Plays a role in the immune response of alternatively activated or M2 macrophages in processes such as wound healing and tissue regeneration, immune defense against multicellular pathogens and parasites, and immune suppression and allergic inflammation; the regulatory outcome seems to be organ specific. In tumor-infiltrating dendritic cells (DCs) and myeloid-derived suppressor cells (MDSCs) plays a role in suppression of T cell-mediated antitumor immunity. The sequence is that of Arginase-1 (Arg1) from Rattus norvegicus (Rat).